The sequence spans 297 residues: Phosphatidylserine decarboxylase proenzyme (297 aa).

Catalysis depends on charge relay system; for autoendoproteolytic cleavage activity residues Asp112, His168, and Ser255. The active-site Schiff-base intermediate with substrate; via pyruvic acid; for decarboxylase activity is Ser255. The residue at position 255 (Ser255) is a Pyruvic acid (Ser); by autocatalysis.

Belongs to the phosphatidylserine decarboxylase family. PSD-B subfamily. Prokaryotic type II sub-subfamily. In terms of assembly, heterodimer of a large membrane-associated beta subunit and a small pyruvoyl-containing alpha subunit. Pyruvate is required as a cofactor. In terms of processing, is synthesized initially as an inactive proenzyme. Formation of the active enzyme involves a self-maturation process in which the active site pyruvoyl group is generated from an internal serine residue via an autocatalytic post-translational modification. Two non-identical subunits are generated from the proenzyme in this reaction, and the pyruvate is formed at the N-terminus of the alpha chain, which is derived from the carboxyl end of the proenzyme. The autoendoproteolytic cleavage occurs by a canonical serine protease mechanism, in which the side chain hydroxyl group of the serine supplies its oxygen atom to form the C-terminus of the beta chain, while the remainder of the serine residue undergoes an oxidative deamination to produce ammonia and the pyruvoyl prosthetic group on the alpha chain. During this reaction, the Ser that is part of the protease active site of the proenzyme becomes the pyruvoyl prosthetic group, which constitutes an essential element of the active site of the mature decarboxylase.

Its subcellular location is the cell membrane. The catalysed reaction is a 1,2-diacyl-sn-glycero-3-phospho-L-serine + H(+) = a 1,2-diacyl-sn-glycero-3-phosphoethanolamine + CO2. It participates in phospholipid metabolism; phosphatidylethanolamine biosynthesis; phosphatidylethanolamine from CDP-diacylglycerol: step 2/2. Its function is as follows. Catalyzes the formation of phosphatidylethanolamine (PtdEtn) from phosphatidylserine (PtdSer). This chain is Phosphatidylserine decarboxylase proenzyme, found in Clostridium tetani (strain Massachusetts / E88).